We begin with the raw amino-acid sequence, 616 residues long: Dihydroxy-acid dehydratase (616 aa).

Position 81 (aspartate 81) interacts with Mg(2+). [2Fe-2S] cluster is bound at residue cysteine 122. 2 residues coordinate Mg(2+): aspartate 123 and lysine 124. An N6-carboxylysine modification is found at lysine 124. [2Fe-2S] cluster is bound at residue cysteine 195. Position 491 (glutamate 491) interacts with Mg(2+). Serine 517 (proton acceptor) is an active-site residue.

It belongs to the IlvD/Edd family. In terms of assembly, homodimer. [2Fe-2S] cluster serves as cofactor. The cofactor is Mg(2+).

It catalyses the reaction (2R)-2,3-dihydroxy-3-methylbutanoate = 3-methyl-2-oxobutanoate + H2O. The enzyme catalyses (2R,3R)-2,3-dihydroxy-3-methylpentanoate = (S)-3-methyl-2-oxopentanoate + H2O. The protein operates within amino-acid biosynthesis; L-isoleucine biosynthesis; L-isoleucine from 2-oxobutanoate: step 3/4. Its pathway is amino-acid biosynthesis; L-valine biosynthesis; L-valine from pyruvate: step 3/4. Functionally, functions in the biosynthesis of branched-chain amino acids. Catalyzes the dehydration of (2R,3R)-2,3-dihydroxy-3-methylpentanoate (2,3-dihydroxy-3-methylvalerate) into 2-oxo-3-methylpentanoate (2-oxo-3-methylvalerate) and of (2R)-2,3-dihydroxy-3-methylbutanoate (2,3-dihydroxyisovalerate) into 2-oxo-3-methylbutanoate (2-oxoisovalerate), the penultimate precursor to L-isoleucine and L-valine, respectively. The protein is Dihydroxy-acid dehydratase of Erwinia tasmaniensis (strain DSM 17950 / CFBP 7177 / CIP 109463 / NCPPB 4357 / Et1/99).